We begin with the raw amino-acid sequence, 192 residues long: UPF0149 protein YgfB (192 aa).

Belongs to the UPF0149 family.

The protein is UPF0149 protein YgfB of Salmonella typhi.